Reading from the N-terminus, the 459-residue chain is Exodeoxyribonuclease 7 large subunit (459 aa).

The protein belongs to the XseA family. Heterooligomer composed of large and small subunits.

It localises to the cytoplasm. It catalyses the reaction Exonucleolytic cleavage in either 5'- to 3'- or 3'- to 5'-direction to yield nucleoside 5'-phosphates.. In terms of biological role, bidirectionally degrades single-stranded DNA into large acid-insoluble oligonucleotides, which are then degraded further into small acid-soluble oligonucleotides. The chain is Exodeoxyribonuclease 7 large subunit from Pseudomonas fluorescens (strain Pf0-1).